Consider the following 529-residue polypeptide: Calcium/calmodulin-dependent protein kinase type II subunit gamma (529 aa).

Residues 14-272 (YQLFEELGKG…ADQALKHPWV (259 aa)) form the Protein kinase domain. Residues 20 to 28 (LGKGAFSVV) and lysine 43 each bind ATP. Residue aspartate 136 is the Proton acceptor of the active site. The interval 283–292 (HRQETVECLR) is autoinhibitory domain. Phosphothreonine; by autocatalysis occurs at positions 287, 306, and 307. The segment at 294–316 (FNARRKLKGAILTTMLVSRNFSA) is calmodulin-binding. 5 positions are modified to phosphoserine: serine 311, serine 334, serine 349, serine 352, and serine 455. Residues 324 to 353 (KSDGGVKKRKSSSSVHLMPQSNNKNSLVSP) are disordered. Positions 342–352 (PQSNNKNSLVS) are enriched in polar residues.

It belongs to the protein kinase superfamily. CAMK Ser/Thr protein kinase family. CaMK subfamily. As to quaternary structure, CAMK2 is composed of 4 different chains: alpha (CAMK2A), beta (CAMK2B), gamma (CAMK2G), and delta (CAMK2D). The different isoforms assemble into homo- or heteromultimeric holoenzymes composed of 12 subunits with two hexameric rings stacked one on top of the other. In terms of processing, autophosphorylation of Thr-287 following activation by Ca(2+)/calmodulin. Phosphorylation of Thr-287 locks the kinase into an activated state.

Its subcellular location is the sarcoplasmic reticulum membrane. It carries out the reaction L-seryl-[protein] + ATP = O-phospho-L-seryl-[protein] + ADP + H(+). The catalysed reaction is L-threonyl-[protein] + ATP = O-phospho-L-threonyl-[protein] + ADP + H(+). Its activity is regulated as follows. Activated by Ca(2+)/calmodulin. Binding of calmodulin results in conformational change that relieves intrasteric autoinhibition and allows autophosphorylation of Thr-287 which turns the kinase in a constitutively active form and confers to the kinase a Ca(2+)-independent activity. Functionally, calcium/calmodulin-dependent protein kinase that functions autonomously after Ca(2+)/calmodulin-binding and autophosphorylation, and is involved in sarcoplasmic reticulum Ca(2+) transport in skeletal muscle and may function in dendritic spine and synapse formation and neuronal plasticity. In slow-twitch muscles, is involved in regulation of sarcoplasmic reticulum (SR) Ca(2+) transport and in fast-twitch muscle participates in the control of Ca(2+) release from the SR through phosphorylation of the ryanodine receptor-coupling factor triadin. In the central nervous system, it is involved in the regulation of neurite formation and arborization. It may participate in the promotion of dendritic spine and synapse formation and maintenance of synaptic plasticity which enables long-term potentiation (LTP) and hippocampus-dependent learning. In response to interferon-gamma (IFN-gamma) stimulation, catalyzes phosphorylation of STAT1, stimulating the JAK-STAT signaling pathway. The sequence is that of Calcium/calmodulin-dependent protein kinase type II subunit gamma (Camk2g) from Mus musculus (Mouse).